The sequence spans 832 residues: Histone acetyltransferase KAT2B (832 aa).

The span at 1–22 (MSEAGGAGPGGCGAGAGAGAGP) shows a compositional bias: gly residues. Disordered stretches follow at residues 1–54 (MSEA…ACGP) and 395–436 (SYNS…DSHV). Residues 24-39 (ALPPQPAALPPAPPQG) show a composition bias toward pro residues. Positions 40 to 54 (SPCAAAAGGSGACGP) are enriched in low complexity. Residues 395–413 (SYNSTSSSLEQPNAGSSSP) are compositionally biased toward polar residues. Basic and acidic residues predominate over residues 425 to 436 (PGEKRKMTDSHV). An N-acetyltransferase domain is found at 503–651 (LNQKPNKKIL…GATLMGCELN (149 aa)). Glu-570 (proton donor/acceptor) is an active-site residue. Residues 574-576 (CAV), 581-587 (QVKGYGT), and 612-615 (YAIG) contribute to the acetyl-CoA site. The disordered stretch occupies residues 706–725 (IRETGWKPSGKEKSKEPRDP). Positions 714–725 (SGKEKSKEPRDP) are enriched in basic and acidic residues. Positions 723–827 (RDPDQLYSTL…KFFFSKIKEA (105 aa)) constitute a Bromo domain.

This sequence belongs to the acetyltransferase family. GCN5 subfamily. As to quaternary structure, interacts with SIRT1. Interacts (unsumoylated form) with NR2C1; the interaction promotes transactivation activity. Interacts with EP300, CREBBP and DDX17. Interacts with NCOA1 and NCOA3. Component of a large chromatin remodeling complex, at least composed of MYSM1, KAT2B/PCAF, RBM10 and KIF11/TRIP5. Interacts with NR2C2 (hypophosphorylated and unsumoylated form); the interaction promotes the transactivation activity of NR2C2. Interacts with KLF1; the interaction does not acetylate KLF1 and there is no enhancement of its transactivational activity. Interacts with NFE4. Interacts with MECOM. Interacts with E2F1; the interaction acetylates E2F1 augmenting its DNA-binding and transcriptional activity. Interacts with NPAS2, BMAL1 and CLOCK. Interacts with BCAS3. Interacts with CEBPB. Interacts with NR4A3. Interacts with NFATC2. Interacts with TBX5. Interacts with PLK4. Interacts with RB1; this interaction leads to RB1 acetylation. Interacts with VRK1. (Microbial infection) Interacts with and acetylates HIV-1 Tat. In terms of assembly, (Microbial infection) Interacts with HTLV-1 Tax. Ubiquitously expressed but most abundant in heart and skeletal muscle. Also expressed in the skin, in keratinocytes (at protein level).

Its subcellular location is the nucleus. It localises to the cytoplasm. It is found in the cytoskeleton. The protein localises to the microtubule organizing center. The protein resides in the centrosome. The enzyme catalyses L-lysyl-[histone] + acetyl-CoA = N(6)-acetyl-L-lysyl-[histone] + CoA + H(+). The catalysed reaction is L-lysyl-[protein] + acetyl-CoA = N(6)-acetyl-L-lysyl-[protein] + CoA + H(+). It carries out the reaction spermidine + acetyl-CoA = N(8)-acetylspermidine + CoA + H(+). With respect to regulation, activated in vitro by very low concentrations of spermidine, but inhibited at spermidine concentrations higher than 4 uM. The activating effect of low spermidine concentrations may be mediated by N(8)-acetylspermidine produced by KAT2B/P/CAF itself acting as a positive feedback loop. Functionally, functions as a histone acetyltransferase (HAT) to promote transcriptional activation. Has significant histone acetyltransferase activity with core histones (H3 and H4), and also with nucleosome core particles. Has a a strong preference for acetylation of H3 at 'Lys-9' (H3K9ac). Also acetylates non-histone proteins, such as ACLY, MAPRE1/EB1, PLK4, RRP9/U3-55K and TBX5. Inhibits cell-cycle progression and counteracts the mitogenic activity of the adenoviral oncoprotein E1A. Acts as a circadian transcriptional coactivator which enhances the activity of the circadian transcriptional activators: NPAS2-BMAL1 and CLOCK-BMAL1 heterodimers. Involved in heart and limb development by mediating acetylation of TBX5, acetylation regulating nucleocytoplasmic shuttling of TBX5. Acts as a negative regulator of centrosome amplification by mediating acetylation of PLK4. Acetylates RRP9/U3-55K, a core subunit of the U3 snoRNP complex, impairing pre-rRNA processing. Acetylates MAPRE1/EB1, promoting dynamic kinetochore-microtubule interactions in early mitosis. Also acetylates spermidine. Its function is as follows. (Microbial infection) In case of HIV-1 infection, it is recruited by the viral protein Tat. Regulates Tat's transactivating activity and may help inducing chromatin remodeling of proviral genes. This chain is Histone acetyltransferase KAT2B, found in Homo sapiens (Human).